The following is a 90-amino-acid chain: Probable Fe(2+)-trafficking protein (90 aa).

The protein belongs to the Fe(2+)-trafficking protein family.

Functionally, could be a mediator in iron transactions between iron acquisition and iron-requiring processes, such as synthesis and/or repair of Fe-S clusters in biosynthetic enzymes. This chain is Probable Fe(2+)-trafficking protein, found in Nitrosococcus oceani (strain ATCC 19707 / BCRC 17464 / JCM 30415 / NCIMB 11848 / C-107).